We begin with the raw amino-acid sequence, 276 residues long: Undecaprenyl-diphosphatase 2 (276 aa).

Helical transmembrane passes span 4–24 (IEAL…VSSL), 44–64 (DFLP…LIYF), 87–107 (ARLM…GLLL), 114–134 (LFAS…LLLW), 150–170 (LSFA…LPGF), 193–213 (FSFL…IPKL), 225–245 (LLLA…WFLM), and 256–276 (LRPF…FKLV).

This sequence belongs to the UppP family.

It is found in the cell inner membrane. The catalysed reaction is di-trans,octa-cis-undecaprenyl diphosphate + H2O = di-trans,octa-cis-undecaprenyl phosphate + phosphate + H(+). Its function is as follows. Catalyzes the dephosphorylation of undecaprenyl diphosphate (UPP). Confers resistance to bacitracin. The polypeptide is Undecaprenyl-diphosphatase 2 (Chromobacterium violaceum (strain ATCC 12472 / DSM 30191 / JCM 1249 / CCUG 213 / NBRC 12614 / NCIMB 9131 / NCTC 9757 / MK)).